The chain runs to 159 residues: Ribosomal RNA large subunit methyltransferase H (159 aa).

S-adenosyl-L-methionine is bound by residues L76, G108, and 127–132; that span reads FSKMTF.

It belongs to the RNA methyltransferase RlmH family. Homodimer.

It is found in the cytoplasm. The catalysed reaction is pseudouridine(1915) in 23S rRNA + S-adenosyl-L-methionine = N(3)-methylpseudouridine(1915) in 23S rRNA + S-adenosyl-L-homocysteine + H(+). Its function is as follows. Specifically methylates the pseudouridine at position 1915 (m3Psi1915) in 23S rRNA. This is Ribosomal RNA large subunit methyltransferase H from Clostridium botulinum (strain Eklund 17B / Type B).